A 204-amino-acid chain; its full sequence is Recombination protein RecR (204 aa).

The C4-type zinc finger occupies 58-75 (CSICQNITDLGTDPCLLC). Positions 83–181 (SVICVVESPT…NVTRIARGIP (99 aa)) constitute a Toprim domain.

Belongs to the RecR family.

Functionally, may play a role in DNA repair. It seems to be involved in an RecBC-independent recombinational process of DNA repair. It may act with RecF and RecO. The sequence is that of Recombination protein RecR from Chlorobaculum parvum (strain DSM 263 / NCIMB 8327) (Chlorobium vibrioforme subsp. thiosulfatophilum).